We begin with the raw amino-acid sequence, 145 residues long: Large ribosomal subunit protein uL11 (145 aa).

Belongs to the universal ribosomal protein uL11 family. Part of the ribosomal stalk of the 50S ribosomal subunit. Interacts with L10 and the large rRNA to form the base of the stalk. L10 forms an elongated spine to which L12 dimers bind in a sequential fashion forming a multimeric L10(L12)X complex. In terms of processing, one or more lysine residues are methylated.

Forms part of the ribosomal stalk which helps the ribosome interact with GTP-bound translation factors. This Rickettsia africae (strain ESF-5) protein is Large ribosomal subunit protein uL11.